A 225-amino-acid polypeptide reads, in one-letter code: MRGLTDGRTPRGTRRTTQAASTAVAVFVALGVSLAGCGTGGTGARDEGPAHADAVGGAGSASPAPAAKASPSKAPDRVDAVRLVKADPKVSPEVKRELKPCVADEYPIDVSYGKVTDGSADDVVVNVLTCGDAVGVGSYVYREEDGAYQNVFKAEEPPVYAEIDRGDLVVTKQVYDKGDPVSSPSGENVITYRWASDRFTEEYRTHNDYSKAAGNAPTPAPEPDS.

An N-terminal signal peptide occupies residues methionine 1–glycine 36. The N-palmitoyl cysteine moiety is linked to residue cysteine 37. A lipid anchor (S-diacylglycerol cysteine) is attached at cysteine 37. Disordered stretches follow at residues glycine 40–arginine 77 and threonine 205–serine 225. Over residues serine 60–lysine 73 the composition is skewed to low complexity.

The protein localises to the cell membrane. May be involved in the stabilization of the cell envelope or may interact with the sensor protein CseC to modulate its activity, in response to cell envelope stress. This chain is Lipoprotein CseA (cseA), found in Streptomyces coelicolor (strain ATCC BAA-471 / A3(2) / M145).